The sequence spans 303 residues: Serine/threonine-protein phosphatase 6 catalytic subunit (303 aa).

The Mn(2+) site is built by D51, H53, D79, and N111. H112 serves as the catalytic Proton donor. Residues H161 and H235 each coordinate Mn(2+).

The protein belongs to the PPP phosphatase family. PP-6 (PP-V) subfamily. Requires Mn(2+) as cofactor.

It is found in the cytoplasm. The enzyme catalyses O-phospho-L-seryl-[protein] + H2O = L-seryl-[protein] + phosphate. It catalyses the reaction O-phospho-L-threonyl-[protein] + H2O = L-threonyl-[protein] + phosphate. May be involved in controlling cellularization or in regulating transcription of the genes involved in this process. In Drosophila melanogaster (Fruit fly), this protein is Serine/threonine-protein phosphatase 6 catalytic subunit (PpV).